The chain runs to 361 residues: Septin-2 (361 aa).

Residue Y17 is modified to Phosphotyrosine. A Septin-type G domain is found at 34–306 (KGFEFTLMVV…ENFRSERLKR (273 aa)). The segment at 44-51 (GESGLGKS) is G1 motif. GTP contacts are provided by residues 44–51 (GESGLGKS), T78, G104, and 183–191 (KADTLTLKE). The segment at 101–104 (DTPG) is G3 motif. Residues 182 to 185 (AKAD) are G4 motif. An N6-acetyllysine modification is found at K190. Y211 is modified (phosphotyrosine). A Phosphoserine modification is found at S218. GTP is bound by residues G241 and R256. Residues 260–270 (WGVVEVENPEH) are important for dimerization.

Belongs to the TRAFAC class TrmE-Era-EngA-EngB-Septin-like GTPase superfamily. Septin GTPase family. In terms of assembly, septins polymerize into heterooligomeric protein complexes that form filaments, and associate with cellular membranes, actin filaments and microtubules. GTPase activity is required for filament formation. Septin filaments are assembled from asymmetrical heterotrimers, composed of SEPTIN2, SEPTIN6 and SEPTIN7 that associate head-to-head to form a hexameric unit. Interaction between SEPTIN2 and SEPTIN7 seems indirect. Also interacts with SEPTIN9 and SEPTIN5. Interaction with SEPTIN4 not detected. Component of a septin core octameric complex consisting of SEPTIN12, SEPTIN7, SEPTIN6 and SEPTIN2 or SEPTIN4 in the order 12-7-6-2-2-6-7-12 or 12-7-6-4-4-6-7-12 and located in the sperm annulus. Interacts with MAP4. Interacts with DZIP1L.

The protein resides in the cytoplasm. It is found in the cytoskeleton. Its subcellular location is the spindle. It localises to the cleavage furrow. The protein localises to the midbody. The protein resides in the cell cortex. It is found in the cell projection. Its subcellular location is the cilium membrane. It localises to the cilium. The protein localises to the flagellum. In terms of biological role, filament-forming cytoskeletal GTPase. Forms a filamentous structure with SEPTIN12, SEPTIN6, SEPTIN2 and probably SEPTIN4 at the sperm annulus which is required for the structural integrity and motility of the sperm tail during postmeiotic differentiation. Required for normal organization of the actin cytoskeleton. Plays a role in the biogenesis of polarized columnar-shaped epithelium by maintaining polyglutamylated microtubules, thus facilitating efficient vesicle transport, and by impeding MAP4 binding to tubulin. Required for the progression through mitosis. Forms a scaffold at the midplane of the mitotic splindle required to maintain CENPE localization at kinetochores and consequently chromosome congression. During anaphase, may be required for chromosome segregation and spindle elongation. Plays a role in ciliogenesis and collective cell movements. In cilia, required for the integrity of the diffusion barrier at the base of the primary cilium that prevents diffusion of transmembrane proteins between the cilia and plasma membranes: probably acts by regulating the assembly of the tectonic-like complex (also named B9 complex) by localizing TMEM231 protein. This is Septin-2 from Rattus norvegicus (Rat).